A 516-amino-acid polypeptide reads, in one-letter code: 2-isopropylmalate synthase (516 aa).

Positions 10–271 (IRIFDTTLRD…TTGIDTRELA (262 aa)) constitute a Pyruvate carboxyltransferase domain. Residues D19, H205, H207, and N241 each coordinate Mn(2+). Positions 396–516 (ELVSFRVEAG…REKASNRETP (121 aa)) are regulatory domain.

This sequence belongs to the alpha-IPM synthase/homocitrate synthase family. LeuA type 1 subfamily. Homodimer. Mn(2+) serves as cofactor.

The protein localises to the cytoplasm. The catalysed reaction is 3-methyl-2-oxobutanoate + acetyl-CoA + H2O = (2S)-2-isopropylmalate + CoA + H(+). It participates in amino-acid biosynthesis; L-leucine biosynthesis; L-leucine from 3-methyl-2-oxobutanoate: step 1/4. Its function is as follows. Catalyzes the condensation of the acetyl group of acetyl-CoA with 3-methyl-2-oxobutanoate (2-ketoisovalerate) to form 3-carboxy-3-hydroxy-4-methylpentanoate (2-isopropylmalate). This Acidimicrobium ferrooxidans (strain DSM 10331 / JCM 15462 / NBRC 103882 / ICP) protein is 2-isopropylmalate synthase.